Here is a 222-residue protein sequence, read N- to C-terminus: Ras-related protein Rab-41 (222 aa).

Residues Ser41, Val42, Gly43, Lys44, Thr45, Ser46, and Thr63 each coordinate GTP. Thr45 is a Mg(2+) binding site. The tract at residues 58–66 (CACQATVGI) is switch-I. Thr63 and Asp86 together coordinate Mg(2+). Residues Gly89, Asn144, Lys145, Asp147, Ser174, Ala175, and Lys176 each contribute to the GTP site. The switch-II stretch occupies residues 89–105 (GQERFHSLIPSYIRDST). Cys222 carries S-geranylgeranyl cysteine lipidation.

This sequence belongs to the small GTPase superfamily. Rab family. Mg(2+) is required as a cofactor. Widely expressed in brain, testis, lung, heart, ovary, colon, kidney, uterus and spleen but not in liver.

Its subcellular location is the cytoplasm. The catalysed reaction is GTP + H2O = GDP + phosphate + H(+). Regulated by guanine nucleotide exchange factors (GEFs) which promote the exchange of bound GDP for free GTP. Regulated by GTPase activating proteins (GAPs) which increase the GTP hydrolysis activity. Inhibited by GDP dissociation inhibitors (GDIs). In terms of biological role, the small GTPases Rab are key regulators of intracellular membrane trafficking, from the formation of transport vesicles to their fusion with membranes. Rabs cycle between an inactive GDP-bound form and an active GTP-bound form that is able to recruit to membranes different sets of downstream effectors directly responsible for vesicle formation, movement, tethering and fusion. RAB41 is required for normal Golgi ribbon organization and ER-to-Golgi trafficking. This chain is Ras-related protein Rab-41, found in Homo sapiens (Human).